The sequence spans 113 residues: uncharacterized protein (113 aa).

An N-terminal signal peptide occupies residues 1–29 (MLVVYMCIWVLYLLLFLFLFLFIASPASL). Transmembrane regions (helical) follow at residues 34–54 (THIL…CAFF) and 56–76 (QVLC…FYFF).

The protein localises to the membrane. This is an uncharacterized protein from Saccharomyces cerevisiae (strain ATCC 204508 / S288c) (Baker's yeast).